A 257-amino-acid chain; its full sequence is Glutamate racemase (257 aa).

Residues 12–13 and 44–45 each bind substrate; these read DS and YG. Cysteine 75 acts as the Proton donor/acceptor in catalysis. 76–77 provides a ligand contact to substrate; sequence NT. Residue cysteine 176 is the Proton donor/acceptor of the active site. 177-178 contributes to the substrate binding site; that stretch reads TH.

It belongs to the aspartate/glutamate racemases family.

The enzyme catalyses L-glutamate = D-glutamate. Its pathway is cell wall biogenesis; peptidoglycan biosynthesis. Provides the (R)-glutamate required for cell wall biosynthesis. The sequence is that of Glutamate racemase from Thermus thermophilus (strain ATCC 27634 / DSM 579 / HB8).